Here is a 295-residue protein sequence, read N- to C-terminus: Bifunctional protein FolD (295 aa).

Residues 166 to 168 (GRS), serine 195, and isoleucine 236 contribute to the NADP(+) site.

It belongs to the tetrahydrofolate dehydrogenase/cyclohydrolase family. As to quaternary structure, homodimer.

It carries out the reaction (6R)-5,10-methylene-5,6,7,8-tetrahydrofolate + NADP(+) = (6R)-5,10-methenyltetrahydrofolate + NADPH. The catalysed reaction is (6R)-5,10-methenyltetrahydrofolate + H2O = (6R)-10-formyltetrahydrofolate + H(+). Its pathway is one-carbon metabolism; tetrahydrofolate interconversion. Functionally, catalyzes the oxidation of 5,10-methylenetetrahydrofolate to 5,10-methenyltetrahydrofolate and then the hydrolysis of 5,10-methenyltetrahydrofolate to 10-formyltetrahydrofolate. This is Bifunctional protein FolD from Chlorobium phaeovibrioides (strain DSM 265 / 1930) (Prosthecochloris vibrioformis (strain DSM 265)).